An 85-amino-acid polypeptide reads, in one-letter code: YcgL domain-containing protein ECA2367 (85 aa).

Residues methionine 1–valine 85 form the YcgL domain.

This chain is YcgL domain-containing protein ECA2367, found in Pectobacterium atrosepticum (strain SCRI 1043 / ATCC BAA-672) (Erwinia carotovora subsp. atroseptica).